A 384-amino-acid polypeptide reads, in one-letter code: Ceramide very long chain fatty acid hydroxylase SCS7 (384 aa).

Over 1–197 (MSTNTSKTLE…NFLEPLTKTA (197 aa)) the chain is Cytoplasmic. The region spanning 9-90 (LELFSKKTVQ…EDEYLIGYLA (82 aa)) is the Cytochrome b5 heme-binding domain. Heme is bound by residues H45 and H72. A helical transmembrane segment spans residues 198-216 (WWVVPVAWLPVVVYHMGVA). Over 217–221 (LKNMN) the chain is Lumenal. Residues 222–246 (QLFACFLFCVGVFVWTLIEYGLHRF) form a helical membrane-spanning segment. Residues H244, H249, H268, H271, and H272 each coordinate Zn(2+). Residues 247 to 284 (LFHFDDWLPESNIAFATHFLLHGCHHYLPMDKYRLVMP) lie on the Cytoplasmic side of the membrane. The helical transmembrane segment at 285-302 (PTLFVILCAPFYKLVFAL) threads the bilayer. Topologically, residues 303–304 (LP) are lumenal. Residues 305–328 (LYWAYAGFAGGLFGYVCYDECHFF) form a helical membrane-spanning segment. Zn(2+) contacts are provided by H326, H330, H345, H348, and H349. Over 329–384 (LHHSKLPPFMRKLKKYHLEHHYKNYQLGFGVTSWFWDEVFGTYLGPDAPLSKMKYE) the chain is Cytoplasmic.

The protein belongs to the sterol desaturase family. SCS7 subfamily. It depends on Zn(2+) as a cofactor.

Its subcellular location is the endoplasmic reticulum membrane. The enzyme catalyses an N-(1,2 saturated acyl)-(4R)-hydroxysphinganine + 2 Fe(II)-[cytochrome b5] + O2 + 2 H(+) = an N-(2R-hydroxyacyl)-4R-hydroxysphinganine + 2 Fe(III)-[cytochrome b5] + H2O. It catalyses the reaction an N-(1,2-saturated acyl)sphinganine + 2 Fe(II)-[cytochrome b5] + O2 + 2 H(+) = an N-[(2'R)-hydroxyacyl]sphinganine + 2 Fe(III)-[cytochrome b5] + H2O. It carries out the reaction N-hexacosanoyl-(4R)-hydroxysphinganine + 2 Fe(II)-[cytochrome b5] + O2 + 2 H(+) = N-(2-hydroxyhexacosanyl)-(4R)-hydroxysphinganine + 2 Fe(III)-[cytochrome b5] + H2O. It participates in sphingolipid metabolism. In terms of biological role, ceramide hydroxylase involved in the hydroxylation of sphingolipid-associated very long chain fatty acids. Postulated to hydroxylate the very long chain fatty acid of dihydroceramides and phytoceramides at C-2. This Saccharomyces cerevisiae (strain ATCC 204508 / S288c) (Baker's yeast) protein is Ceramide very long chain fatty acid hydroxylase SCS7.